A 140-amino-acid polypeptide reads, in one-letter code: Chorion class A protein Ld2/Ld41 (140 aa).

Positions 1-21 (MNSFAFLLVCIQACLVQSVFS) are cleaved as a signal peptide.

It belongs to the chorion protein family.

In terms of biological role, this protein is one of many from the eggshell of the gypsy moth. This Lymantria dispar (Gypsy moth) protein is Chorion class A protein Ld2/Ld41.